Consider the following 129-residue polypeptide: Transcriptional activator protein (129 aa).

The interval 1-20 (MRSSSPSQPPSIKRAHRQAK) is disordered. The Nuclear localization signal signature appears at 13-28 (KRAHRQAKKRAIRRRR). Residues 33-50 (CGCSIYFHLGCAGHGFTH) fold into a zinc finger. Residues 73–118 (LFQDTQSRGPTVYQNEGIPRTDTVQPQPEESVASPQSLPELPSLDD) are disordered. 2 stretches are compositionally biased toward polar residues: residues 74-86 (FQDT…TVYQ) and 94-109 (DTVQ…SPQS). Ser109 is modified (phosphoserine; by host). The segment at 115-129 (SLDDVDDSFWINLFS) is transactivation.

The protein belongs to the geminiviridae transcriptional activator protein family. In terms of assembly, monomer. Homodimer. Homooligomer. Self-interaction correlates with nuclear localization and efficient activation of transcription. Monomers suppress local silencing by interacting with and inactivating host adenosine kinase 2 (ADK2) in the cytoplasm. Interacts with and inhibits host SNF1 kinase. Post-translationally, phosphorylated at Ser-109 by A.thaliana KIN10.

It is found in the host nucleus. The protein resides in the host cytoplasm. Functionally, strong activator of the late viral genes promoters. Enhances the expression of the capsid protein and nuclear shuttle protein. Acts as a suppressor of RNA-mediated gene silencing, also known as post-transcriptional gene silencing (PTGS), a mechanism of plant viral defense that limits the accumulation of viral RNAs. Suppresses the host RNA silencing by inhibiting adenosine kinase 2 (ADK2), a kinase involved in a general methylation pathway. Also suppresses the host basal defense by interacting with and inhibiting SNF1 kinase, a key regulator of cell metabolism implicated in innate antiviral defense. Determines pathogenicity. The sequence is that of Transcriptional activator protein from Nicotiana tabacum (Common tobacco).